The chain runs to 184 residues: Guanylate kinase (184 aa).

Residues 5–183 (KKLIILTGPS…TAKRIIKLIQ (179 aa)) form the Guanylate kinase-like domain. An ATP-binding site is contributed by 12 to 19 (GPSGVGKG).

It belongs to the guanylate kinase family.

Its subcellular location is the cytoplasm. It carries out the reaction GMP + ATP = GDP + ADP. In terms of biological role, essential for recycling GMP and indirectly, cGMP. In Prochlorococcus marinus (strain MIT 9312), this protein is Guanylate kinase.